A 247-amino-acid polypeptide reads, in one-letter code: 3,4-dihydroxy-2-butanone 4-phosphate synthase (247 aa).

D-ribulose 5-phosphate contacts are provided by residues arginine 38 to glutamate 39, aspartate 43, arginine 179 to threonine 183, and glutamate 203. Glutamate 39 is a Mg(2+) binding site.

The protein belongs to the DHBP synthase family. Homodimer. The cofactor is Mg(2+). Requires Mn(2+) as cofactor.

The enzyme catalyses D-ribulose 5-phosphate = (2S)-2-hydroxy-3-oxobutyl phosphate + formate + H(+). It functions in the pathway cofactor biosynthesis; riboflavin biosynthesis; 2-hydroxy-3-oxobutyl phosphate from D-ribulose 5-phosphate: step 1/1. In terms of biological role, catalyzes the conversion of D-ribulose 5-phosphate to formate and 3,4-dihydroxy-2-butanone 4-phosphate. This chain is 3,4-dihydroxy-2-butanone 4-phosphate synthase, found in Methanosarcina mazei (strain ATCC BAA-159 / DSM 3647 / Goe1 / Go1 / JCM 11833 / OCM 88) (Methanosarcina frisia).